The primary structure comprises 210 residues: Acetoin utilization protein AcuA (210 aa).

The 142-residue stretch at 20 to 161 (LIEGPVSPED…YRKIMEKMMN (142 aa)) folds into the N-acetyltransferase domain.

Belongs to the acetyltransferase family. As to quaternary structure, monomer.

It functions in the pathway ketone degradation; acetoin degradation. With respect to regulation, activity is sensitive to salt concentration, a high concentration of KCL (500 mM) is needed for complete inactivation. Functionally, part of the acuABC operon, which is possibly involved in the breakdown of acetoin and butanediol. Acts as an acetyltransferase inactivating acetyl-CoA synthetase AcsA via acetylation at a Lys residue. This Bacillus subtilis (strain 168) protein is Acetoin utilization protein AcuA (acuA).